Consider the following 581-residue polypeptide: Leucine-rich repeat transmembrane neuronal protein 3 (581 aa).

An N-terminal signal peptide occupies residues 1–30; sequence MGFNVIRLLSGSAVALVIAPTVLLTMLSSA. In terms of domain architecture, LRRNT spans 31–61; it reads ERGCPKGCRCEGKMVYCESQKLQEIPSSISA. The Extracellular segment spans residues 31 to 419; that stretch reads ERGCPKGCRC…ADAEHISFHK (389 aa). 10 LRR repeats span residues 63 to 83, 86 to 107, 110 to 131, 134 to 155, 158 to 179, 182 to 203, 206 to 226, 230 to 251, 254 to 275, and 279 to 300; these read CLGL…QFKG, QLTW…AFNG, RLKE…TFRP, NLRN…QFRG, KLLS…IFQD, NLEL…VFAG, RLKE…ALFP, SLQN…MSWT, SLQR…SVFQ, and NLQR…ILDS. Residue N126 is glycosylated (N-linked (GlcNAc...) asparagine). In terms of domain architecture, LRRCT spans 312–363; that stretch reads NIWECSRNICSLVNWLKSFKGLRENTIICASPKELQGVNVIDAVKNYSICGK. The N-linked (GlcNAc...) asparagine glycan is linked to N357. Residues 377 to 408 form a disordered region; it reads KPTFKPKLPRPKHESKPPLPPTVGATEPGPET. A helical transmembrane segment spans residues 420-440; that stretch reads IIAGSVALFLSVLVILLVIYV. Residues 441 to 581 lie on the Cytoplasmic side of the membrane; it reads SWKRYPASMK…RISDHKQQLA (141 aa).

This sequence belongs to the LRRTM family. Expressed in neuronal tissues.

The protein localises to the cell membrane. Its subcellular location is the postsynaptic cell membrane. Its function is as follows. Exhibits a limited synaptogenic activity in vitro, restricted to excitatory presynaptic differentiation. May play a role in the development and maintenance of the vertebrate nervous system. This chain is Leucine-rich repeat transmembrane neuronal protein 3 (LRRTM3), found in Homo sapiens (Human).